The following is a 1001-amino-acid chain: Open rectifier potassium channel protein 1 (1001 aa).

The Cytoplasmic segment spans residues 1-6 (MSPNRW). A helical transmembrane segment spans residues 7-27 (ILLLIFYISYLMFGAAIYYHI). A glycan (N-linked (GlcNAc...) asparagine) is linked at Asn-58. Residues 95–111 (AFFFAFTVCSTVGYGNI) constitute an intramembrane region (pore-forming). A helical transmembrane segment spans residues 120–140 (MIMIAYSVIGIPVNGILFAGL). At 141-170 (GEYFGRTFEAIYRRYKKYKMSTDMHYVPPQ) the chain is on the cytoplasmic side. Residues 171–191 (LGLITTVVIALIPGIALFLLL) form a helical membrane-spanning segment. The pore-forming intramembrane region spans 208–224 (LYYSYVTTTTIGFGDYV). Residues 244–264 (IFVIVWFIFSLGYLVMIMTFI) form a helical membrane-spanning segment. Topologically, residues 265–1001 (TRGLQSKKLA…TGSSGAPAEK (737 aa)) are cytoplasmic. Residues Ser-332, Ser-373, Ser-562, and Ser-565 each carry the phosphoserine modification. The segment at 591-668 (SQSYLRNGRG…QAPSARRGSM (78 aa)) is disordered. Residues Ser-685, Ser-691, and Ser-715 each carry the phosphoserine modification. Disordered stretches follow at residues 768-795 (GGAAGGGGISRGSRKQRKMGNAGLEPPQ) and 830-1001 (SPTG…PAEK). Over residues 832–841 (TGGAATAPAA) the composition is skewed to low complexity. Over residues 855 to 873 (AANQSQITAGPSNAPTVQS) the composition is skewed to polar residues. The segment covering 911–926 (RRLSLRPSPLARELSP) has biased composition (low complexity). A compositionally biased stretch (polar residues) spans 961–983 (RPSTSSTHSPLSRIVQISQAQRK). Residues 984 to 1001 (SSMPSAAATGSSGAPAEK) show a composition bias toward low complexity.

The protein belongs to the two pore domain potassium channel (TC 1.A.1.8) family. In terms of tissue distribution, widespread expression in adult, strongest expression in muscle, brain and ovary. Also present at low levels in larva and embryo.

It is found in the membrane. In terms of biological role, background potassium channel. Rectification is dependent on external potassium concentration. Acts as an outwardly rectifying channel but as external potassium levels increase, this is reversed. This Drosophila melanogaster (Fruit fly) protein is Open rectifier potassium channel protein 1 (Ork1).